The sequence spans 156 residues: Small ribosomal subunit protein uS7c (156 aa).

Belongs to the universal ribosomal protein uS7 family. Part of the 30S ribosomal subunit.

Its subcellular location is the plastid. It is found in the chloroplast. One of the primary rRNA binding proteins, it binds directly to 16S rRNA where it nucleates assembly of the head domain of the 30S subunit. This chain is Small ribosomal subunit protein uS7c (rps7), found in Mesostigma viride (Green alga).